Here is a 119-residue protein sequence, read N- to C-terminus: Large ribosomal subunit protein bL20 (119 aa).

Belongs to the bacterial ribosomal protein bL20 family.

In terms of biological role, binds directly to 23S ribosomal RNA and is necessary for the in vitro assembly process of the 50S ribosomal subunit. It is not involved in the protein synthesizing functions of that subunit. The chain is Large ribosomal subunit protein bL20 from Acidovorax sp. (strain JS42).